A 409-amino-acid polypeptide reads, in one-letter code: Lissencephaly-1 homolog (409 aa).

A LisH domain is found at 7–39 (QKEELNKAIADYLHQCGFEDTLNAFKQDANMPG). Residues 54 to 80 (TSVIRLQKKVMDLETRLSEAEKEVHHG) are a coiled coil. The tract at residues 72 to 95 (EAEKEVHHGGGPKKTRSPEDWIPR) is disordered. WD repeat units follow at residues 104-145 (GHRS…RTLK), 146-187 (GHTD…RTLH), 188-229 (GHDH…KTFQ), 231-269 (HGEW…CKCD), 272-332 (DHDH…CLVT), 335-374 (GHDN…CAKT), and 377-409 (AHEH…WECR).

This sequence belongs to the WD repeat LIS1/nudF family.

It is found in the cytoplasm. The protein resides in the cytoskeleton. The protein localises to the microtubule organizing center. It localises to the centrosome. In terms of biological role, positively regulates the activity of the minus-end directed microtubule motor protein dynein. May enhance dynein-mediated microtubule sliding by targeting dynein to the microtubule plus end. Required for several dynein- and microtubule-dependent processes. This chain is Lissencephaly-1 homolog, found in Nematostella vectensis (Starlet sea anemone).